Here is a 270-residue protein sequence, read N- to C-terminus: Putative phosphoenolpyruvate synthase regulatory protein (270 aa).

Glycine 150–threonine 157 provides a ligand contact to ADP.

Belongs to the pyruvate, phosphate/water dikinase regulatory protein family. PSRP subfamily.

The catalysed reaction is [pyruvate, water dikinase] + ADP = [pyruvate, water dikinase]-phosphate + AMP + H(+). The enzyme catalyses [pyruvate, water dikinase]-phosphate + phosphate + H(+) = [pyruvate, water dikinase] + diphosphate. Its function is as follows. Bifunctional serine/threonine kinase and phosphorylase involved in the regulation of the phosphoenolpyruvate synthase (PEPS) by catalyzing its phosphorylation/dephosphorylation. In Shewanella oneidensis (strain ATCC 700550 / JCM 31522 / CIP 106686 / LMG 19005 / NCIMB 14063 / MR-1), this protein is Putative phosphoenolpyruvate synthase regulatory protein.